Consider the following 551-residue polypeptide: Hydroxylamine reductase (551 aa).

Positions 3, 6, 18, and 25 each coordinate [2Fe-2S] cluster. Hybrid [4Fe-2O-2S] cluster contacts are provided by His-249, Glu-273, Cys-317, Cys-405, Cys-433, Cys-459, Glu-493, and Lys-495. Position 405 is a cysteine persulfide (Cys-405).

It belongs to the HCP family. It depends on [2Fe-2S] cluster as a cofactor. Hybrid [4Fe-2O-2S] cluster serves as cofactor.

The protein resides in the cytoplasm. The catalysed reaction is A + NH4(+) + H2O = hydroxylamine + AH2 + H(+). Functionally, catalyzes the reduction of hydroxylamine to form NH(3) and H(2)O. The sequence is that of Hydroxylamine reductase from Actinobacillus pleuropneumoniae serotype 5b (strain L20).